The following is a 591-amino-acid chain: Aspartate--tRNA(Asp/Asn) ligase (591 aa).

Glu176 provides a ligand contact to L-aspartate. The tract at residues Gln200 to Lys203 is aspartate. An L-aspartate-binding site is contributed by Arg222. Residues Arg222–Glu224 and Gln231 each bind ATP. Position 450 (His450) interacts with L-aspartate. Glu484 lines the ATP pocket. Position 491 (Arg491) interacts with L-aspartate. Residue Gly536 to Arg539 participates in ATP binding.

It belongs to the class-II aminoacyl-tRNA synthetase family. Type 1 subfamily. Homodimer.

The protein localises to the cytoplasm. It carries out the reaction tRNA(Asx) + L-aspartate + ATP = L-aspartyl-tRNA(Asx) + AMP + diphosphate. In terms of biological role, aspartyl-tRNA synthetase with relaxed tRNA specificity since it is able to aspartylate not only its cognate tRNA(Asp) but also tRNA(Asn). Reaction proceeds in two steps: L-aspartate is first activated by ATP to form Asp-AMP and then transferred to the acceptor end of tRNA(Asp/Asn). This chain is Aspartate--tRNA(Asp/Asn) ligase, found in Bacillus cereus (strain B4264).